The primary structure comprises 1142 residues: MARRISPVVAFLLCFGLSHFFEAEARLQHSVALHRQKREWIVPPQILEENVDYTKKDFIAKIRSDKEVAHMKYLRYSLRGVGADQEPFNLFVVNPETGYVRITGILDRESISQYNLSGIALFTDGSIAENDIGLRIKVKDQNDNAPVFGVMNPGAVDELSAVGTEVMRLNCFDADEPGNPNSQIKYEIVDQQPAGQSMFTVENNRRVVVANPNLDRETVDQYVLLVKASDLNGAPGGNAATGTVTIKINDVNDNVPTLGGPYEASIEENTEKVEVMRLKVSDLHLKGTDNWEGDCYIASGNEAGYFSIHMDPKTNEAVLMLDKAVDYEDVKDLNLGIGVANKAPFHPSVSGGSQGATISFGGSGGGAGSGAAGGAGAMGGASGSGGGTGASSWSSSGVPLYNVNIKVKNQPEGPKFFPGTKAIPISEGKAFDSTEIIARYPAIDTDTGKEATNVKYIKSSDPDNWLTIDEKTGAIRMNKAPDRESKYLVNGTYYAKVLSITQDLPSKTATGTIAIQVEDFNDHCPTLISNVQTLCTDKDAVLVTAKDEDAPPNGAPFDFNIVSEGTAGKWTVEYMNDTTAIFRTHEKLWPGPHELMVEVTDQQGLKCPEPQKLQVDVCTCKNQGGCDRTATGDAKKGSRLGPAGIGLLLLALLALLLIPLLLLLCTCGMTGAFTDMPFETKVHLISSNTEGQGEDRDVPLMCPPSNVDGMGFMTKDYMAVGAMHSAGLGLGVGAGVGAAGFLESTSTMGGRGYNEMELDYMNSIGRNNAYSSRDMAGDFDGMALSDGYLCEYYSQKSRVVDGFGKDDPMVYDYEGKGSPVGSVGCCSLLEDQNDLEFLNDLGPKFTTLADICGGKKTEIPAPAPAPLPPPPKPVVDRSEVVSSTTNILNTGNIATNRVNTVNVASNMATASSTRVENVLVTDNRPTMITSVHPAPTLLVQPQPMYYMVEQQPSTVLVAERPAMTQGMYVLNSGPVAEGMVVQGGNIAANTLTRGERMVLVFRGGPAQALNNGMLHTSNLSGSQLLLVDGGATSGQVLQGTIQRGVAGSQGLMFVDGQGGQVIQGSINNGISTHGGSQNVFYVENKGGSSVVQGGLQMGKASTAGSLIGDVGIGGSSVKITQNPSSHKVVVQERKVVTTQSVK.

A signal peptide spans 1–18; it reads MARRISPVVAFLLCFGLS. The propeptide occupies 19 to 38; it reads HFFEAEARLQHSVALHRQKR. The Extracellular portion of the chain corresponds to 39–643; it reads EWIVPPQILE…AKKGSRLGPA (605 aa). 4 Cadherin domains span residues 64–148, 156–258, 259–416, and 417–527; these read SDKE…APVF, VDEL…VPTL, GGPY…GPKF, and FPGT…CPTL. Asparagine 115 carries N-linked (GlcNAc...) asparagine glycosylation. Residues 369 to 389 are disordered; it reads SGAAGGAGAMGGASGSGGGTG. N-linked (GlcNAc...) asparagine glycosylation is found at asparagine 490 and asparagine 576. Residues 644-664 form a helical membrane-spanning segment; it reads GIGLLLLALLALLLIPLLLLL. At 665–1142 the chain is on the cytoplasmic side; it reads CTCGMTGAFT…RKVVTTQSVK (478 aa). Desmoglein repeat repeat units follow at residues 948–974, 975–998, 999–1039, and 1040–1071; these read VEQQ…NSGP, VAEG…ERMV, LVFR…VLQG, and TIQR…NGIS.

The protein resides in the cell junction. It is found in the desmosome. It localises to the cell membrane. The protein localises to the cytoplasm. Functionally, a component of desmosome cell-cell junctions which are required for positive regulation of cellular adhesion. Involved in the interaction of plaque proteins and intermediate filaments mediating cell-cell adhesion. Required for embryogenesis, specifically for progression of epiboly and normal convergence-extension movements during gastrulation. The sequence is that of Desmoglein-2.1 from Danio rerio (Zebrafish).